A 335-amino-acid polypeptide reads, in one-letter code: Mesoderm-specific transcript homolog protein (335 aa).

Helical transmembrane passes span 13-33 (WWVQVGLLAVPLLAAYLHIPP), 88-108 (IWEGLTLSFHRVIALDFLGFG), and 266-286 (VGALASVSIPIHFIYGPLDPV). Residues 71–310 (IVVLLHGFPT…PRSTVSILDD (240 aa)) enclose the AB hydrolase-1 domain. The RVIALD signature appears at 98–103 (RVIALD).

Belongs to the AB hydrolase superfamily. As to expression, no detectable transcripts during preimplantation development. Isoform 1 was not detected in either in vitro-matured oocytes (IVF) or parthenogenetically activated (PA) blastocyst. Isoform 2 was expressed in IVF and PA blastocysts.

It is found in the endoplasmic reticulum membrane. This Bos taurus (Bovine) protein is Mesoderm-specific transcript homolog protein (MEST).